We begin with the raw amino-acid sequence, 485 residues long: MGKFAKKLERAIRGYTFDDVLLIPQATEVEPKDVDVSTQITPNVKLNIPILSAAMDTVTEWEMAVAMAREGGLGVIHRNMSIEEQVEQVKRVKKAERFIVEDVITISPEETVDFALFLMEKHDIDGLPVVENEKVVGIISKKDIAAREGKLVKELMTKDVITVPENIEVEEALKIMIENRIDRLPVVDKEGRLIGLITMSDLVARKKYKNAVRDENGELLVAAAVSPFDIRRAIELDRAGADVIVVDTAHAHNLKAIKAMKEMRQKVDADFIVGNIANPKAVDDLTFADAVKVGIGPGSICTTRIVAGVGVPQITAIAMVADRAQEYGLYVIADGGIKYSGDIVKAIAAGADAVMLGNLLAGTKEAPGKEVIINGRKYKQYRGMGSLGAMMKGGAERYYQGGYMKTRKFVPEGVEGVVPYRGTVSEVLYQLVGGLKAGMGYVGARNIKELKEKGEFVIITSAGLRESHPHDIIITNEAPNYPLEK.

2 consecutive CBS domains span residues 99–154 and 156–215; these read IVED…LVKE and MTKD…VRDE. NAD(+) is bound by residues D247 and 294 to 296; that span reads GIG. K(+) is bound by residues G296 and G298. S299 is a binding site for IMP. Position 301 (C301) interacts with K(+). Residue C301 is the Thioimidate intermediate of the active site. IMP-binding positions include 334 to 336, 357 to 358, and 381 to 385; these read DGG, GN, and YRGMG. R397 (proton acceptor) is an active-site residue. IMP is bound at residue E412. E466, S467, and H468 together coordinate K(+).

Belongs to the IMPDH/GMPR family. As to quaternary structure, homotetramer. The cofactor is K(+).

It catalyses the reaction IMP + NAD(+) + H2O = XMP + NADH + H(+). The protein operates within purine metabolism; XMP biosynthesis via de novo pathway; XMP from IMP: step 1/1. Mycophenolic acid (MPA) is a non-competitive inhibitor that prevents formation of the closed enzyme conformation by binding to the same site as the amobile flap. In contrast, mizoribine monophosphate (MZP) is a competitive inhibitor that induces the closed conformation. MPA is a potent inhibitor of mammalian IMPDHs but a poor inhibitor of the bacterial enzymes. MZP is a more potent inhibitor of bacterial IMPDH. In terms of biological role, catalyzes the conversion of inosine 5'-phosphate (IMP) to xanthosine 5'-phosphate (XMP), the first committed and rate-limiting step in the de novo synthesis of guanine nucleotides, and therefore plays an important role in the regulation of cell growth. The sequence is that of Inosine-5'-monophosphate dehydrogenase from Pyrococcus abyssi (strain GE5 / Orsay).